The chain runs to 125 residues: Fluoride-specific ion channel FluC (125 aa).

A run of 4 helical transmembrane segments spans residues 4–24 (ILLV…VGLW), 32–52 (AFPW…GFLA), 68–88 (FLIT…LDAI), and 100–120 (LAYI…GLAL). 2 residues coordinate Na(+): glycine 75 and threonine 78.

This sequence belongs to the fluoride channel Fluc/FEX (TC 1.A.43) family.

Its subcellular location is the cell inner membrane. The enzyme catalyses fluoride(in) = fluoride(out). Its activity is regulated as follows. Na(+) is not transported, but it plays an essential structural role and its presence is essential for fluoride channel function. Functionally, fluoride-specific ion channel. Important for reducing fluoride concentration in the cell, thus reducing its toxicity. The chain is Fluoride-specific ion channel FluC from Rhizobium meliloti (strain 1021) (Ensifer meliloti).